The primary structure comprises 79 residues: Exodeoxyribonuclease 7 small subunit (79 aa).

The protein belongs to the XseB family. As to quaternary structure, heterooligomer composed of large and small subunits.

The protein resides in the cytoplasm. The enzyme catalyses Exonucleolytic cleavage in either 5'- to 3'- or 3'- to 5'-direction to yield nucleoside 5'-phosphates.. Functionally, bidirectionally degrades single-stranded DNA into large acid-insoluble oligonucleotides, which are then degraded further into small acid-soluble oligonucleotides. The sequence is that of Exodeoxyribonuclease 7 small subunit from Lactococcus lactis subsp. lactis (strain IL1403) (Streptococcus lactis).